The chain runs to 634 residues: Leucine--tRNA ligase subunit alpha (634 aa).

The 'HIGH' region signature appears at 43–51 (PSGRIHMGH).

It belongs to the class-I aminoacyl-tRNA synthetase family. Seems to consist of an alpha chain and a beta chain.

The protein localises to the cytoplasm. It carries out the reaction tRNA(Leu) + L-leucine + ATP = L-leucyl-tRNA(Leu) + AMP + diphosphate. This chain is Leucine--tRNA ligase subunit alpha (leuS), found in Aquifex aeolicus (strain VF5).